The sequence spans 158 residues: Endoribonuclease YbeY (158 aa).

Zn(2+)-binding residues include His118, His122, and His128.

This sequence belongs to the endoribonuclease YbeY family. It depends on Zn(2+) as a cofactor.

Its subcellular location is the cytoplasm. In terms of biological role, single strand-specific metallo-endoribonuclease involved in late-stage 70S ribosome quality control and in maturation of the 3' terminus of the 16S rRNA. In Bartonella henselae (strain ATCC 49882 / DSM 28221 / CCUG 30454 / Houston 1) (Rochalimaea henselae), this protein is Endoribonuclease YbeY.